Here is a 527-residue protein sequence, read N- to C-terminus: Inositolphosphotransferase 1 (527 aa).

Residues 1–24 (MNVIFSLASFVKNMYNASLNQRNL) lie on the Cytoplasmic side of the membrane. A helical membrane pass occupies residues 25 to 45 (ISLPFNFMLNFAPVFIWLSIF). Residues 46 to 99 (KRAGLIPIRLRPDIHSKFAFFADQFLFGDYWHELTVQLPDNTSKLFFWSFISSS) lie on the Lumenal side of the membrane. The helical transmembrane segment at 100 to 120 (AFLLVFLICIPFAIWYYIYYI) threads the bilayer. Residues 121–152 (KHVNYNLLEWFANIFHYPCKRKQRPIQKRFRT) are Cytoplasmic-facing. A helical membrane pass occupies residues 153 to 173 (IFIPFALPLFTFVILNIDHFF). Residues 174–190 (AYQSDANFTKTKDLLAW) are Lumenal-facing. A helical membrane pass occupies residues 191-211 (FSYVILHLTAPILTAVYLYVF). Residues 212-219 (QPPGTLKC) lie on the Cytoplasmic side of the membrane. Residues 220-240 (FSFALGLQNIAGVLTHLLVPM) form a helical membrane-spanning segment. The Lumenal portion of the chain corresponds to 241–288 (ASPWFTHLYGIDDTEHVNYTQEGFAAGLIRVDSHLGTHLNTKGFHMSP). A helical transmembrane segment spans residues 289-309 (IVFGAVPSLHSAIAFQCFLFL). The Cytoplasmic segment spans residues 310–435 (VSRSTSLKHR…KWIFKIVNDG (126 aa)). The tract at residues 331 to 404 (NDSSTFKLSE…GGGDGSIINS (74 aa)) is disordered. Residues 376–389 (ERSSSPSSSFTVSS) are compositionally biased toward low complexity. A helical transmembrane segment spans residues 436–456 (FIPKFWAILYIILQWWATMYL). Residues 457-461 (DHHYR) lie on the Lumenal side of the membrane. A helical membrane pass occupies residues 462–482 (FDLFVGVLYAMTSFIIINWFV). The Cytoplasmic segment spans residues 483–527 (LQPKVLKKWIHIRLGDKVDTRNEARTFGMRVFCGTKMEWFFDPLA).

The protein localises to the golgi apparatus membrane. It catalyses the reaction an alpha-D-mannosyl-(1&lt;-&gt;6)-1D-myo-inositol-1-phospho-N-[(R)-2-hydroxy-very-long-chain fatty acyl]-(R)-4-hydroxysphingoid base + a 1,2-diacyl-sn-glycero-3-phospho-(1D-myo-inositol) = an alpha-D-mannosyl-6-(1D-myo-inositol phospho)-(1&lt;-&gt;6)-1D-myo-inositol-1-phospho-N-[(R)-2-hydroxy-very-long-chain fatty acyl]-(R)-4-hydroxysphingoid base + a 1,2-diacyl-sn-glycerol. The enzyme catalyses a mannosylinositol-1-phospho-N-acyl-sphingoid base + a 1,2-diacyl-sn-glycero-3-phospho-(1D-myo-inositol) = an inositol phosphomannosylnositol-1-phospho-N-acylsphingoid base + a 1,2-diacyl-sn-glycerol. The catalysed reaction is a mannosylinositol-1-phospho-N-(2-hydroxyacyl)-4R-hydroxysphingoid base + a 1,2-diacyl-sn-glycero-3-phospho-(1D-myo-inositol) = an inositol phosphomannosylnositol-1-phospho-N-(2-hydroxyacyl)-4R-hydroxysphingoid base + a 1,2-diacyl-sn-glycerol. Functionally, catalyzes the addition of a phosphorylinositol group onto mannosyl phosphorylinositol ceramide (MIPC) to form mannosyl diphosphorylinositol ceramide (M(IP)2C), the major sphingolipid in membranes of S.cerevisiae. This Saccharomyces cerevisiae (strain ATCC 204508 / S288c) (Baker's yeast) protein is Inositolphosphotransferase 1.